The sequence spans 190 residues: FMRFamide-related peptides (190 aa).

A signal peptide spans 1–21; the sequence is MSCSRTVALLAALWLVVGATS. A propeptide spanning residues 22-33 is cleaved from the precursor; sequence SPVRRSPDLEAR. At phenylalanine 45 the chain carries Phenylalanine amide. Residues 69–104 constitute a propeptide that is removed on maturation; that stretch reads GNSFLRFGRSQPLTLSTDDLVSLLRAYEEDYDTPMT. The residue at position 113 (phenylalanine 113) is a Phenylalanine amide. Positions 116 to 150 are excised as a propeptide; that stretch reads DPNFIRLGRSADDDKSAFEQNSELVVSGYPQRKSR. Residue leucine 158 is modified to Leucine amide. Positions 160 to 190 are excised as a propeptide; that stretch reads RDSEEVNENEFEETEESRRKRSADSCHDCQS. The tract at residues 161–190 is disordered; that stretch reads DSEEVNENEFEETEESRRKRSADSCHDCQS. The segment covering 164–174 has biased composition (acidic residues); that stretch reads EVNENEFEETE. Residues 175–190 are compositionally biased toward basic and acidic residues; the sequence is ESRRKRSADSCHDCQS.

It belongs to the FARP (FMRFamide related peptide) family. As to expression, RFamide 1: Expressed in corpora cardiaca (CC), corpora allata (CA), antennal lobe (AL) and gnathal ganglion (GNG) (at protein level). Expression in AL detected in most animals, in CC, CA and in GNG in some animals (at protein level). RFamide precursor-related peptide 2: Expressed in corpora cardiaca (CC), corpora allata (CA), antennal lobe (AL) and gnathal ganglion (GNG) (at protein level). Expression in AL detected in some animals, expression in CC, CA and GNG in few animals (at protein level). RFamide 3: Expressed in corpora cardiaca (CC), corpora allata (CA), antennal lobe (AL) and gnathal ganglion (GNG) (at protein level). Expression in AL detected in all animals, in CC, CA and GNG in most animals (at protein level). RFamide 5: Expressed in corpora cardiaca (CC), corpora allata (CA), antennal lobe (AL) and gnathal ganglion (GNG) (at protein level). Expression in AL detected in all animals, in CC, CA and in GNG in some animals (at protein level).

Its subcellular location is the secreted. In terms of biological role, in insects, FMRFamide and related peptides have modulatory actions at skeletal neuromuscular junctions, and peptides that are immunologically related to FMRFamide are released into the circulation from neurohemal organs. The chain is FMRFamide-related peptides from Agrotis ipsilon (Black cutworm moth).